Consider the following 363-residue polypeptide: Copper-containing nitrite reductase (363 aa).

Positions 1–24 are cleaved as a signal peptide; sequence MSVFRSVLGACVLLGSCASSLALA. Plastocyanin-like domains are found at residues 25–193 and 194–363; these read GGAE…YDRV and YTIG…EPKQ. The Cu cation site is built by H113, H118, H153, C154, H163, M168, and H324.

The protein belongs to the multicopper oxidase family. As to quaternary structure, homotrimer. Requires Cu(2+) as cofactor. It depends on Cu(+) as a cofactor. FAD is required as a cofactor.

It is found in the periplasm. It carries out the reaction nitric oxide + Fe(III)-[cytochrome c] + H2O = Fe(II)-[cytochrome c] + nitrite + 2 H(+). The protein operates within nitrogen metabolism; nitrate reduction (denitrification); dinitrogen from nitrate: step 2/4. In Pseudomonas chlororaphis (Pseudomonas aureofaciens), this protein is Copper-containing nitrite reductase (nirK).